We begin with the raw amino-acid sequence, 176 residues long: Ribosome maturation factor RimM (176 aa).

Residues 100-173 (KDEYHYHDLI…WLLINPPPGL (74 aa)) form the PRC barrel domain.

The protein belongs to the RimM family. Binds ribosomal protein uS19.

It is found in the cytoplasm. An accessory protein needed during the final step in the assembly of 30S ribosomal subunit, possibly for assembly of the head region. Essential for efficient processing of 16S rRNA. May be needed both before and after RbfA during the maturation of 16S rRNA. It has affinity for free ribosomal 30S subunits but not for 70S ribosomes. The chain is Ribosome maturation factor RimM from Prochlorococcus marinus (strain NATL1A).